We begin with the raw amino-acid sequence, 44 residues long: Protein PsbN (44 aa).

Residues 6–26 form a helical membrane-spanning segment; sequence FFFTIFLWCLLLSITGYSIYV.

Belongs to the PsbN family.

The protein localises to the plastid. It localises to the chloroplast thylakoid membrane. In terms of biological role, may play a role in photosystem I and II biogenesis. The sequence is that of Protein PsbN from Chlorella vulgaris (Green alga).